The chain runs to 208 residues: Uridine kinase (208 aa).

11–18 (GGTGSGKS) contacts ATP.

It belongs to the uridine kinase family.

It localises to the cytoplasm. It carries out the reaction uridine + ATP = UMP + ADP + H(+). The enzyme catalyses cytidine + ATP = CMP + ADP + H(+). Its pathway is pyrimidine metabolism; CTP biosynthesis via salvage pathway; CTP from cytidine: step 1/3. It functions in the pathway pyrimidine metabolism; UMP biosynthesis via salvage pathway; UMP from uridine: step 1/1. The sequence is that of Uridine kinase from Alkaliphilus metalliredigens (strain QYMF).